We begin with the raw amino-acid sequence, 1115 residues long: MATMSGTTIVCLIYLTTMLGNSQGVNLKIESPSPPTLCSVEGTFHCDDGMLQCVLMGSKCDGVSDCENGMDESVETCGCLQSEFQCNHTTCIDKILRCDRNDDCSNGLDERECDIYICPLGTHVKWHNHFCVPRDKQCDFLDDCGDNSDEKICERRECVATEFKCNNSQCVAFGNLCDGLVDCVDGSDEDQVACDSDKYFQCAEGSLIKKEFVCDGWVDCKLTFADELNCKLCDEDDFRCSDTRCIQKSNVCDGYCDCKTCDDEEVCANNTYGCPMDTKYMCRSIYGEPRCIDKDNVCNMINDCRDGNVGTDEYYCSNDSECKNFQAAMGFFYCPEERCLAKHLYCDLHPDCINGEDEQSCLAPPKCSQDEFQCHHGKCIPISKRCDSVHDCVDWSDEMNCENHQCAANMKSCLSGHCIEEHKWCNFHRECPDGSDEKDCDPRPVCEANQFRCKNGQCIDPLQVCVKGDKYDGCADQSHLINCSQHICLEGQFRCRKSFCINQTKVCDGTVDCLQGMWDENNCRYWCPHGQAICQCEGVTMDCTGQKLKEMPVQQMEEDLSKLMIGDNLLNLTSTTFSATYYDKVTYLDLSRNHLTEIPIYSFQNMWKLTHLNLADNNITSLKNGSLLGLSNLKQLHINGNKIETIEEDTFSSMIHLTVLDLSNQRLTHVYKNMFKGLKQITVLNISRNQINSIDNGAFNNLANVRLIDLSGNVIKDIGQKVFMGLPRLVELKTDSYRFCCLAPEGVKCSPKQDEFSSCEDLMSNHVLRVSIWVLGVIALVGNFVVIFWRVRDFRGGKVHSFLITNLAIGDFLMGVYLLIIATADTYYRGVYISHDENWKQSGLCQFAGFVSTFSSELSVLTLSTITLDRLICILFPLRRTRLGLRQAIIVMSCIWVLVFLLAVLPLLGFSYFENFYGRSGVCLALHVTPDRRPGWEYSVGVFILLNLLSFVLIASSYLWMFSVAKKTRSAVRTAESKNDNAMARRMTLIVMTDFCCWVPIIVLGFVSLAGARADDQVYAWIAVFVLPLNSATNPVIYTLSTAPFLGNVRKRANRFRKSFIHSFTGDTKHSYVDDGTTHSYCEKKSPYRQLELKRLRSLNSSPPMYYNTELHSDS.

The N-terminal stretch at methionine 1–glycine 24 is a signal peptide. The Extracellular portion of the chain corresponds to valine 25–valine 767. LDL-receptor class A domains follow at residues threonine 36 to cysteine 79, cysteine 77 to isoleucine 115, tyrosine 116 to arginine 155, arginine 156 to serine 196, aspartate 195 to leucine 232, lysine 231 to asparagine 269, tyrosine 272 to asparagine 318, serine 320 to alanine 363, proline 365 to asparagine 403, histidine 404 to proline 442, proline 444 to glutamine 485, and histidine 486 to tyrosine 525. 16 cysteine pairs are disulfide-bonded: cysteine 38-cysteine 53, cysteine 46-cysteine 66, cysteine 60-cysteine 77, cysteine 79-cysteine 91, cysteine 86-cysteine 104, cysteine 98-cysteine 113, cysteine 118-cysteine 131, cysteine 138-cysteine 153, cysteine 158-cysteine 170, cysteine 165-cysteine 183, cysteine 177-cysteine 194, cysteine 202-cysteine 220, cysteine 214-cysteine 230, cysteine 233-cysteine 245, cysteine 240-cysteine 258, and cysteine 252-cysteine 267. Asparagine 87 is a glycosylation site (N-linked (GlcNAc...) asparagine). The N-linked (GlcNAc...) asparagine glycan is linked to asparagine 166. N-linked (GlcNAc...) asparagine glycosylation is present at asparagine 269. 3 disulfide bridges follow: cysteine 274–cysteine 291, cysteine 282–cysteine 304, and cysteine 298–cysteine 316. Asparagine 318 carries N-linked (GlcNAc...) asparagine glycosylation. Intrachain disulfides connect cysteine 322–cysteine 339, cysteine 334–cysteine 352, cysteine 346–cysteine 361, cysteine 367–cysteine 379, cysteine 374–cysteine 392, cysteine 386–cysteine 401, cysteine 406–cysteine 418, cysteine 413–cysteine 431, cysteine 425–cysteine 440, cysteine 446–cysteine 458, cysteine 453–cysteine 474, cysteine 465–cysteine 483, cysteine 488–cysteine 500, cysteine 495–cysteine 513, and cysteine 507–cysteine 523. The N-linked (GlcNAc...) asparagine glycan is linked to asparagine 482. Asparagine 502 carries an N-linked (GlcNAc...) asparagine glycan. The 45-residue stretch at tryptophan 518 to lysine 562 folds into the LRRNT domain. The N-linked (GlcNAc...) asparagine glycan is linked to asparagine 571. 6 LRR repeats span residues lysine 584–asparagine 605, lysine 608–glycine 629, asparagine 632–serine 653, histidine 656–glycine 677, glutamine 680–asparagine 701, and asparagine 704–glycine 725. Asparagine 618 and asparagine 624 each carry an N-linked (GlcNAc...) asparagine glycan. Asparagine 685 carries N-linked (GlcNAc...) asparagine glycosylation. Residues leucine 768–phenylalanine 788 form a helical membrane-spanning segment. Residues tryptophan 789–serine 801 are Cytoplasmic-facing. A helical membrane pass occupies residues phenylalanine 802–alanine 822. At threonine 823–glutamate 857 the chain is on the extracellular side. A helical transmembrane segment spans residues leucine 858–leucine 878. The Cytoplasmic segment spans residues arginine 879–glutamine 887. Residues alanine 888 to leucine 908 traverse the membrane as a helical segment. Residues glycine 909 to glycine 941 lie on the Extracellular side of the membrane. Residues valine 942–phenylalanine 962 traverse the membrane as a helical segment. Residues serine 963 to threonine 988 are Cytoplasmic-facing. The chain crosses the membrane as a helical span at residues leucine 989–leucine 1009. Residues alanine 1010 to glutamine 1017 lie on the Extracellular side of the membrane. The chain crosses the membrane as a helical span at residues valine 1018–tyrosine 1038. Over threonine 1039 to serine 1115 the chain is Cytoplasmic.

The protein belongs to the G-protein coupled receptor 1 family. In terms of tissue distribution, predominantly expressed in a small number of neurons within the central nervous system and to a lesser extent in the heart.

Its subcellular location is the cell membrane. In terms of biological role, might directly transduce signals carried by large extracellular lipoprotein complexes into neuronal events. This Lymnaea stagnalis (Great pond snail) protein is G-protein coupled receptor GRL101.